A 327-amino-acid polypeptide reads, in one-letter code: MAMTTEVKDELSRLVVKSVSARRAEVTSLLRFAGGLHIVAGRVVVEAEVDLGSIARRLRKDIFDLYGYSAVVHVLSASGIRKNTRYVLRVANDGEALARQTGLLDMRGRPVRGLPAQVVGGSIGDAEAAWRGAFLAHGSLTEPGRSSALEVSCPGPEAALALVGAARRLGVGAKAREVRGADRVVVRDGEAIGALLTRMGAQDTRLVWEERRMRREVRATANRLANFDDANLRRSARAAVAAAARVERALEILGDTVPDHLASAGKLRVEHRQASLEELGRLADPPMTKDAVAGRIRRLLSMADRKAKVEGIPDTESAVTPDLLEDA.

The H-T-H motif DNA-binding region spans 275–308 (SLEELGRLADPPMTKDAVAGRIRRLLSMADRKAK).

The protein belongs to the WhiA family.

Functionally, involved in cell division and chromosome segregation. The polypeptide is Probable cell division protein WhiA (Mycobacterium marinum (strain ATCC BAA-535 / M)).